The chain runs to 362 residues: METTVRKQKKNLETKKTSIYSLQLHEMQDWLKEQGEPKFRAGQIFDWLYKKRVKNYEDMSNLSKGLREKLSNSFDITTLNTLVKQTSSDGTIKFLFQLYDGYSIETVLMRHEYGNSICVTTQVGCRIGCTFCASTLGGLKRNLEAGEIVAQVVEVQRALDESEERVSSLVVMGIGEPFDNYDNLMGFLRIINHEKGLHIGARHMTVSTSGIIPKIYKFAEEDLQINFAISLHAPNSELRSKLMPINRAYKLPDLMEAIKYYVNRTGRRITFEYGLFGGENDQVEHAEELAALLKGVKCHVNLIPVNYVPERDYVRTPREQIFLFEKTLKDRGVNVTIRREQGHDIDAACGQLRAKERKEETR.

The active-site Proton acceptor is the Glu105. A Radical SAM core domain is found at 111-344; it reads HEYGNSICVT…VTIRREQGHD (234 aa). Cys118 and Cys349 form a disulfide bridge. The [4Fe-4S] cluster site is built by Cys125, Cys129, and Cys132. S-adenosyl-L-methionine-binding positions include 175 to 176, Ser207, 230 to 232, and Asn306; these read GE and SLH. Catalysis depends on Cys349, which acts as the S-methylcysteine intermediate.

The protein belongs to the radical SAM superfamily. RlmN family. [4Fe-4S] cluster is required as a cofactor.

Its subcellular location is the cytoplasm. The enzyme catalyses adenosine(2503) in 23S rRNA + 2 reduced [2Fe-2S]-[ferredoxin] + 2 S-adenosyl-L-methionine = 2-methyladenosine(2503) in 23S rRNA + 5'-deoxyadenosine + L-methionine + 2 oxidized [2Fe-2S]-[ferredoxin] + S-adenosyl-L-homocysteine. It carries out the reaction adenosine(37) in tRNA + 2 reduced [2Fe-2S]-[ferredoxin] + 2 S-adenosyl-L-methionine = 2-methyladenosine(37) in tRNA + 5'-deoxyadenosine + L-methionine + 2 oxidized [2Fe-2S]-[ferredoxin] + S-adenosyl-L-homocysteine. Functionally, specifically methylates position 2 of adenine 2503 in 23S rRNA and position 2 of adenine 37 in tRNAs. In Bacillus thuringiensis subsp. konkukian (strain 97-27), this protein is Probable dual-specificity RNA methyltransferase RlmN.